We begin with the raw amino-acid sequence, 190 residues long: NAD(P)H-quinone oxidoreductase subunit I (190 aa).

4Fe-4S ferredoxin-type domains lie at 55 to 84 (GRIH…VDWT) and 95 to 124 (KHYS…MTEE). [4Fe-4S] cluster-binding residues include C64, C67, C70, C74, C104, C107, C110, and C114. Residues 169-190 (IEPHDLPAGSQRAGKRPEEITD) form a disordered region.

Belongs to the complex I 23 kDa subunit family. As to quaternary structure, NDH-1 is composed of at least 11 different subunits. [4Fe-4S] cluster serves as cofactor.

The protein localises to the cellular thylakoid membrane. The enzyme catalyses a plastoquinone + NADH + (n+1) H(+)(in) = a plastoquinol + NAD(+) + n H(+)(out). It catalyses the reaction a plastoquinone + NADPH + (n+1) H(+)(in) = a plastoquinol + NADP(+) + n H(+)(out). In terms of biological role, NDH-1 shuttles electrons from an unknown electron donor, via FMN and iron-sulfur (Fe-S) centers, to quinones in the respiratory and/or the photosynthetic chain. The immediate electron acceptor for the enzyme in this species is believed to be plastoquinone. Couples the redox reaction to proton translocation, and thus conserves the redox energy in a proton gradient. The polypeptide is NAD(P)H-quinone oxidoreductase subunit I (Microcystis aeruginosa (strain NIES-843 / IAM M-2473)).